A 668-amino-acid chain; its full sequence is DNA ligase (668 aa).

Residues 34–38 (DTEYD), 83–84 (SL), and Glu114 contribute to the NAD(+) site. Lys116 (N6-AMP-lysine intermediate) is an active-site residue. Arg137, Glu171, Lys286, and Lys310 together coordinate NAD(+). Cys404, Cys407, Cys422, and Cys427 together coordinate Zn(2+). One can recognise a BRCT domain in the interval 588–668 (NSDSIIANKT…FFDLLKSEKG (81 aa)).

The protein belongs to the NAD-dependent DNA ligase family. LigA subfamily. It depends on Mg(2+) as a cofactor. The cofactor is Mn(2+).

It carries out the reaction NAD(+) + (deoxyribonucleotide)n-3'-hydroxyl + 5'-phospho-(deoxyribonucleotide)m = (deoxyribonucleotide)n+m + AMP + beta-nicotinamide D-nucleotide.. Its function is as follows. DNA ligase that catalyzes the formation of phosphodiester linkages between 5'-phosphoryl and 3'-hydroxyl groups in double-stranded DNA using NAD as a coenzyme and as the energy source for the reaction. It is essential for DNA replication and repair of damaged DNA. This Mycoplasma capricolum subsp. capricolum (strain California kid / ATCC 27343 / NCTC 10154) protein is DNA ligase.